The sequence spans 929 residues: ATP-dependent DNA helicase PIF1 (929 aa).

The N-terminal 52 residues, M1–F52, are a transit peptide targeting the mitochondrion. Residues G55 to T89 form a disordered region. Basic and acidic residues predominate over residues T56–R66. The span at A74–T89 shows a compositional bias: polar residues. G302–T309 is an ATP binding site. The DNA-binding element occupies H776–F796. The interval H902–E929 is disordered. Polar residues predominate over residues Q916 to E929.

It belongs to the helicase family. PIF1 subfamily. In terms of assembly, monomer. The cofactor is Mg(2+).

The protein resides in the mitochondrion. It catalyses the reaction Couples ATP hydrolysis with the unwinding of duplex DNA at the replication fork by translocating in the 5'-3' direction. This creates two antiparallel DNA single strands (ssDNA). The leading ssDNA polymer is the template for DNA polymerase III holoenzyme which synthesizes a continuous strand.. It carries out the reaction ATP + H2O = ADP + phosphate + H(+). In terms of biological role, DNA-dependent ATPase and probable 5'-3' DNA helicase required for the maintenance of mitochondrial (kinetoplast) genome stability. Essential for replication of kinetoplast minicircles. Involved in the segregation of minicircle progeny. The sequence is that of ATP-dependent DNA helicase PIF1 from Trypanosoma brucei brucei (strain 927/4 GUTat10.1).